Consider the following 515-residue polypeptide: Glucose-6-phosphate 1-dehydrogenase 6, cytoplasmic (515 aa).

NADP(+)-binding positions include 38–45 (GASGDLAK), Arg73, Tyr155, and Lys182. D-glucose 6-phosphate is bound by residues Lys182, 212–216 (HYLGK), Glu250, and Asp269. His274 functions as the Proton acceptor in the catalytic mechanism. Lys357 contributes to the NADP(+) binding site. Residues Lys360 and Arg365 each contribute to the D-glucose 6-phosphate site. NADP(+) is bound by residues Lys366, Arg370, and Arg394. Gln396 is a D-glucose 6-phosphate binding site. NADP(+)-binding positions include 402 to 404 (YMK), 422 to 424 (DLS), Arg488, and Trp510.

Belongs to the glucose-6-phosphate dehydrogenase family. As to quaternary structure, forms homodimer. As to expression, expressed in roots, leaves, stems, buds, flowers and siliques.

Its subcellular location is the cytoplasm. It is found in the cytosol. It catalyses the reaction D-glucose 6-phosphate + NADP(+) = 6-phospho-D-glucono-1,5-lactone + NADPH + H(+). Its pathway is carbohydrate degradation; pentose phosphate pathway; D-ribulose 5-phosphate from D-glucose 6-phosphate (oxidative stage): step 1/3. With respect to regulation, regulated by metabolites. In terms of biological role, catalyzes the rate-limiting step of the oxidative pentose-phosphate pathway, which represents a route for the dissimilation of carbohydrates besides glycolysis. The main function of this enzyme is to provide reducing power (NADPH) and pentose phosphates for fatty acid and nucleic acid synthesis which are involved in membrane synthesis and cell division. The chain is Glucose-6-phosphate 1-dehydrogenase 6, cytoplasmic from Arabidopsis thaliana (Mouse-ear cress).